Consider the following 447-residue polypeptide: Phosphoglucosamine mutase (447 aa).

Ser-103 serves as the catalytic Phosphoserine intermediate. Mg(2+) is bound by residues Ser-103, Asp-242, Asp-244, and Asp-246. Ser-103 carries the post-translational modification Phosphoserine.

It belongs to the phosphohexose mutase family. The cofactor is Mg(2+). In terms of processing, activated by phosphorylation.

The enzyme catalyses alpha-D-glucosamine 1-phosphate = D-glucosamine 6-phosphate. Functionally, catalyzes the conversion of glucosamine-6-phosphate to glucosamine-1-phosphate. The protein is Phosphoglucosamine mutase of Cereibacter sphaeroides (strain ATCC 17023 / DSM 158 / JCM 6121 / CCUG 31486 / LMG 2827 / NBRC 12203 / NCIMB 8253 / ATH 2.4.1.) (Rhodobacter sphaeroides).